Reading from the N-terminus, the 500-residue chain is Maturase K (500 aa).

It belongs to the intron maturase 2 family. MatK subfamily.

It localises to the plastid. The protein resides in the chloroplast. In terms of biological role, usually encoded in the trnK tRNA gene intron. Probably assists in splicing its own and other chloroplast group II introns. This Prunus laurocerasus (Cherry laurel) protein is Maturase K.